The sequence spans 1027 residues: Abnormal embryogenesis protein 30 (1027 aa).

2 WD repeats span residues 18 to 65 (RTPF…IQAV) and 70 to 109 (KLDSSVSALHFSPDGRFLAAATSKGIIHLLDVETGKVRFS). Disordered regions lie at residues 619–655 (NDSSPFLEEDEGEPEQEEQKPDEEPEPEGEPQPACDL) and 1005–1027 (AMDSGRDLTDNGESDEDEEDDDI). 2 stretches are compositionally biased toward acidic residues: residues 625-647 (LEEDEGEPEQEEQKPDEEPEPEG) and 1014-1027 (DNGESDEDEEDDDI).

It belongs to the APC4 family. The APC/C is probably composed of at least 12 subunits: apc-2, apc-10, apc-11, cdc-26, emb-1, emb-27, emb-30, mat-1, mat-2, mat-3, such-1 and gfi-3.

It participates in protein modification; protein ubiquitination. In terms of biological role, probable component of the anaphase promoting complex/cyclosome (APC/C), a cell cycle-regulated E3 ubiquitin ligase that controls progression through mitosis and the G1 phase of the cell cycle. The APC/C complex acts by mediating ubiquitination and subsequent degradation of target proteins. Developmental role in early embryogenesis and the metaphase to anaphase transition in oocyte and spermatocyte meiosis and mitosis in somatic and germ cells. Required for embryonic anterior-posterior axis formation. Negatively regulates ify-1 protein levels during meiosis I. Plays a role in regulating the abundance of glr-1 receptors in postmitotic neurons, which may in turn control animal locomotion. Involved in regulating GABA neurotransmitter release at neuromuscular junctions in GABA motor neurons. This chain is Abnormal embryogenesis protein 30, found in Caenorhabditis elegans.